Consider the following 96-residue polypeptide: Guanyl-specific ribonuclease Sa (96 aa).

Cysteine 7 and cysteine 96 are disulfide-bonded. Glutamate 54 (proton acceptor) is an active-site residue. Residue histidine 85 is the Proton donor of the active site.

It belongs to the ribonuclease N1/T1 family.

Its subcellular location is the secreted. It catalyses the reaction [RNA] containing guanosine + H2O = an [RNA fragment]-3'-guanosine-3'-phosphate + a 5'-hydroxy-ribonucleotide-3'-[RNA fragment].. The chain is Guanyl-specific ribonuclease Sa (rnaSA) from Kitasatospora aureofaciens (Streptomyces aureofaciens).